The sequence spans 207 residues: Sodium/potassium-transporting ATPase subunit beta-1-interacting protein 1 (207 aa).

The next 3 membrane-spanning stretches (helical) occupy residues 2–22 (GRCSGRCTLVGICCLQLAAAL), 35–55 (APILANFLHIMVVILGILGTL), and 62–82 (LILYSIWLALWVAWNAFIICF). N100 carries N-linked (GlcNAc...) asparagine glycosylation. The chain crosses the membrane as a helical span at residues 147–167 (ALSSALQIFLALFGFVYACYV).

It belongs to the NKAIN family. In terms of assembly, interacts with atp1b1 C-terminus.

The protein localises to the cell membrane. The protein is Sodium/potassium-transporting ATPase subunit beta-1-interacting protein 1 (nkain1) of Xenopus tropicalis (Western clawed frog).